The chain runs to 366 residues: Beta sliding clamp (366 aa).

Belongs to the beta sliding clamp family. As to quaternary structure, forms a ring-shaped head-to-tail homodimer around DNA which binds and tethers DNA polymerases and other proteins to the DNA. The DNA replisome complex has a single clamp-loading complex (3 tau and 1 each of delta, delta', psi and chi subunits) which binds 3 Pol III cores (1 core on the leading strand and 2 on the lagging strand) each with a beta sliding clamp dimer. Additional proteins in the replisome are other copies of gamma, psi and chi, Ssb, DNA helicase and RNA primase.

The protein resides in the cytoplasm. Its function is as follows. Confers DNA tethering and processivity to DNA polymerases and other proteins. Acts as a clamp, forming a ring around DNA (a reaction catalyzed by the clamp-loading complex) which diffuses in an ATP-independent manner freely and bidirectionally along dsDNA. Initially characterized for its ability to contact the catalytic subunit of DNA polymerase III (Pol III), a complex, multichain enzyme responsible for most of the replicative synthesis in bacteria; Pol III exhibits 3'-5' exonuclease proofreading activity. The beta chain is required for initiation of replication as well as for processivity of DNA replication. This chain is Beta sliding clamp (dnaN), found in Buchnera aphidicola subsp. Acyrthosiphon pisum (strain APS) (Acyrthosiphon pisum symbiotic bacterium).